The following is a 41-amino-acid chain: Plantazolicin (41 aa).

A propeptide spanning residues 1 to 27 (MTKITIPTALSAKVHGEGQHLFEPMAA) is cleaved from the precursor. Residue R28 is modified to N2,N2-dimethylarginine; in form plantazolicin A. The thiazole-4-carboxylic acid (Arg-Cys) cross-link spans 28-29 (RC). Cross-links (5-methyloxazole-4-carboxylic acid (Cys-Thr)) lie at residues 29–30 (CT) and 31–32 (CT). The segment at residues 30–31 (TC) is a cross-link (thiazole-4-carboxylic acid (Thr-Cys)). The 5-methyloxazole-4-carboxylic acid (Thr-Thr) cross-link spans 32–33 (TT). Residues 35–36 (IS) constitute a cross-link (oxazole-4-carboxylic acid (Ile-Ser)). 3 cross-links (oxazole-4-carboxylic acid (Ser-Ser)) span residues 36 to 37 (SS), 37 to 38 (SS), and 38 to 39 (SS). A cross-link (5-methyloxazoline-4-carboxylic acid (Ser-Thr)) is located at residues 39–40 (ST).

Post-translationally, maturation of thiazole and oxazole containing antibiotics involves the enzymatic condensation of a Cys, Ser or Thr with the alpha-carbonyl of the preceding amino acid to form a thioether or ether bond, then dehydration to form a double bond with the alpha-amino nitrogen. Thiazoline or oxazoline ring are dehydrogenated to form thiazole or oxazole rings.

It localises to the secreted. The protein resides in the cell wall. Its function is as follows. Peptide antibiotic inhibiting growth of Gram-positive bacteria. The mode of action appears to be disruption of cell walls and lysis of cells. The polypeptide is Plantazolicin (Bacillus pumilus (strain ATCC 7061 / DSM 27 / CCUG 26015 / JCM 2508 / NBRC 12092 / NCIMB 9369 / NCTC 10337 / NRRL NRS-272 / CCM 2144)).